Here is a 307-residue protein sequence, read N- to C-terminus: ATP synthase gamma chain (307 aa).

This sequence belongs to the ATPase gamma chain family. F-type ATPases have 2 components, CF(1) - the catalytic core - and CF(0) - the membrane proton channel. CF(1) has five subunits: alpha(3), beta(3), gamma(1), delta(1), epsilon(1). CF(0) has three main subunits: a, b and c.

The protein localises to the cell membrane. Functionally, produces ATP from ADP in the presence of a proton gradient across the membrane. The gamma chain is believed to be important in regulating ATPase activity and the flow of protons through the CF(0) complex. This is ATP synthase gamma chain from Mycolicibacterium smegmatis (strain ATCC 700084 / mc(2)155) (Mycobacterium smegmatis).